A 209-amino-acid chain; its full sequence is Uracil phosphoribosyltransferase (209 aa).

5-phospho-alpha-D-ribose 1-diphosphate-binding positions include arginine 79, arginine 104, and 131 to 139 (DPMLATGGS). Residues valine 194 and 199 to 201 (GDA) contribute to the uracil site. Aspartate 200 provides a ligand contact to 5-phospho-alpha-D-ribose 1-diphosphate.

Belongs to the UPRTase family. The cofactor is Mg(2+).

It catalyses the reaction UMP + diphosphate = 5-phospho-alpha-D-ribose 1-diphosphate + uracil. It participates in pyrimidine metabolism; UMP biosynthesis via salvage pathway; UMP from uracil: step 1/1. Allosterically activated by GTP. Its function is as follows. Catalyzes the conversion of uracil and 5-phospho-alpha-D-ribose 1-diphosphate (PRPP) to UMP and diphosphate. This chain is Uracil phosphoribosyltransferase, found in Bacillus mycoides (strain KBAB4) (Bacillus weihenstephanensis).